Consider the following 375-residue polypeptide: Glutamate 5-kinase (375 aa).

Position 3 (Lys-3) interacts with ATP. Residues Ser-44, Asp-131, and Asn-143 each coordinate substrate. Residues 163–164 (SD) and 205–211 (TGGMVTK) each bind ATP. One can recognise a PUA domain in the interval 269-346 (EGTLWVDDGA…GDIEALLGYR (78 aa)).

It belongs to the glutamate 5-kinase family.

It is found in the cytoplasm. It carries out the reaction L-glutamate + ATP = L-glutamyl 5-phosphate + ADP. It functions in the pathway amino-acid biosynthesis; L-proline biosynthesis; L-glutamate 5-semialdehyde from L-glutamate: step 1/2. In terms of biological role, catalyzes the transfer of a phosphate group to glutamate to form L-glutamate 5-phosphate. This is Glutamate 5-kinase from Rhodospirillum rubrum (strain ATCC 11170 / ATH 1.1.1 / DSM 467 / LMG 4362 / NCIMB 8255 / S1).